A 364-amino-acid chain; its full sequence is Histidinol-phosphate aminotransferase 1 (364 aa).

Lys211 is subject to N6-(pyridoxal phosphate)lysine.

Belongs to the class-II pyridoxal-phosphate-dependent aminotransferase family. Histidinol-phosphate aminotransferase subfamily. Homodimer. Pyridoxal 5'-phosphate is required as a cofactor.

The enzyme catalyses L-histidinol phosphate + 2-oxoglutarate = 3-(imidazol-4-yl)-2-oxopropyl phosphate + L-glutamate. Its pathway is amino-acid biosynthesis; L-histidine biosynthesis; L-histidine from 5-phospho-alpha-D-ribose 1-diphosphate: step 7/9. This Legionella pneumophila (strain Lens) protein is Histidinol-phosphate aminotransferase 1.